A 354-amino-acid chain; its full sequence is Lariat debranching enzyme (354 aa).

A divalent metal cation is bound by residues C14, H16, and D45. Positions 59, 90, 91, 134, and 156 each coordinate RNA. A divalent metal cation is bound at residue N90. The tract at residues 130-158 (SGIYKSFDEKKPYTYPPSPNDVVSLFHTR) is lariat recognition loop. H180 provides a ligand contact to a divalent metal cation. 5 residues coordinate RNA: G201, D205, H230, M231, and H232. Position 230 (H230) interacts with a divalent metal cation. Position 232 (H232) interacts with a divalent metal cation.

The protein belongs to the lariat debranching enzyme family. Fe(2+) is required as a cofactor. Zn(2+) serves as cofactor. The cofactor is Mn(2+).

The protein resides in the cytoplasm. The protein localises to the perinuclear region. Its activity is regulated as follows. Active in presence of diverse metals including Fe(2+), Zn(2+) and Mn(2+). Binds two metal cations in two adjacent alpha and beta metal-binding pockets. The activity is the highest with Fe(2+) bound to the 2 metal-binding sites. The activity is slightly lower with Fe(2+) bound to the beta site and Zn(2+) to the alpha site and decreases further when only Zn(2+) is bound. No activity with Mn(2+). However, another study showed activity with Mn(2+) bound to the beta site and Zn(2+) to the alpha site. Mn(2+) appears unable to bind to the alpha site. In terms of biological role, cleaves the 2'-5' phosphodiester linkage at the branch point of excised lariat intron RNA and converts them into linear molecules that can be subsequently degraded, thereby facilitating ribonucleotide turnover. In Entamoeba histolytica (strain ATCC 30459 / HM-1:IMSS / ABRM), this protein is Lariat debranching enzyme.